We begin with the raw amino-acid sequence, 256 residues long: MLSAILHGKKTGSGLAGRQFKIGETQGAEDLLTATIFERISYLPNNTFQEVIKKLFDDKEDIGNLQNIEYWPKWMNKNRFIEPDVVLTGTNGKNIIIEAKRYDNTQQQYAIQLANEIMSYYDSTGLSNPILLAIGGMDSYDKKRVEKIKKEIKNILIQNSFNREFTLYCISWKKLYQILESSIHQSEIFLQRILSDIREAYIWHGVRYKSIQWLKSLKRNDIIHISIPIKIRIEKKWIELKKMNISKTHFPSFLGE.

This is an uncharacterized protein from Pasteurella multocida (strain Pm70).